The sequence spans 439 residues: GTPase Obg (439 aa).

The region spanning 3 to 162 (GEFYDSARIF…REIELELKLL (160 aa)) is the Obg domain. The OBG-type G domain maps to 163–333 (ADVGLIGFPN…LLQRVAERLR (171 aa)). Residues 169-176 (GFPNAGKS), 194-198 (FTTLQ), 215-218 (DIPG), 285-288 (NKAD), and 314-316 (SAA) contribute to the GTP site. The Mg(2+) site is built by Ser176 and Thr196. The 78-residue stretch at 351–428 (VPEVDERLYT…IEQAAFDWED (78 aa)) folds into the OCT domain.

Belongs to the TRAFAC class OBG-HflX-like GTPase superfamily. OBG GTPase family. In terms of assembly, monomer. It depends on Mg(2+) as a cofactor.

The protein localises to the cytoplasm. An essential GTPase which binds GTP, GDP and possibly (p)ppGpp with moderate affinity, with high nucleotide exchange rates and a fairly low GTP hydrolysis rate. Plays a role in control of the cell cycle, stress response, ribosome biogenesis and in those bacteria that undergo differentiation, in morphogenesis control. The protein is GTPase Obg of Roseiflexus castenholzii (strain DSM 13941 / HLO8).